The sequence spans 549 residues: Putative acyl-CoA synthetase YngI (549 aa).

ATP is bound by residues 198 to 206, D423, R438, and K529; that span reads TSGTTGFPK.

Belongs to the ATP-dependent AMP-binding enzyme family.

This is Putative acyl-CoA synthetase YngI (yngI) from Bacillus subtilis (strain 168).